The sequence spans 238 residues: Ribonuclease PH (238 aa).

Phosphate contacts are provided by residues Arg-86 and 124-126; that span reads GTR.

It belongs to the RNase PH family. In terms of assembly, homohexameric ring arranged as a trimer of dimers.

The enzyme catalyses tRNA(n+1) + phosphate = tRNA(n) + a ribonucleoside 5'-diphosphate. Functionally, phosphorolytic 3'-5' exoribonuclease that plays an important role in tRNA 3'-end maturation. Removes nucleotide residues following the 3'-CCA terminus of tRNAs; can also add nucleotides to the ends of RNA molecules by using nucleoside diphosphates as substrates, but this may not be physiologically important. Probably plays a role in initiation of 16S rRNA degradation (leading to ribosome degradation) during starvation. This Nitrosospira multiformis (strain ATCC 25196 / NCIMB 11849 / C 71) protein is Ribonuclease PH.